A 422-amino-acid polypeptide reads, in one-letter code: Electron transfer flavoprotein subunit alpha (422 aa).

The segment at 61–80 (KRIDRSGTQQGAGGGKASAS) is disordered. Residues 329–330 (SR), 343–347 (QVGAT), 360–367 (GISGAIQH), and N381 each bind FAD.

This sequence belongs to the ETF alpha-subunit/FixB family. Heterodimer of an alpha and a beta subunit. It depends on FAD as a cofactor.

Functionally, participates in the electron transfer process during N,N-dimethylglycine (DMG) degradation to sarcosine. The protein is Electron transfer flavoprotein subunit alpha of Chromohalobacter salexigens (strain ATCC BAA-138 / DSM 3043 / CIP 106854 / NCIMB 13768 / 1H11).